A 252-amino-acid polypeptide reads, in one-letter code: tRNA (guanine-N(1)-)-methyltransferase (252 aa).

S-adenosyl-L-methionine-binding positions include glycine 113 and 133-138 (IGDYVL).

Belongs to the RNA methyltransferase TrmD family. As to quaternary structure, homodimer.

It is found in the cytoplasm. It catalyses the reaction guanosine(37) in tRNA + S-adenosyl-L-methionine = N(1)-methylguanosine(37) in tRNA + S-adenosyl-L-homocysteine + H(+). In terms of biological role, specifically methylates guanosine-37 in various tRNAs. In Nitrosococcus oceani (strain ATCC 19707 / BCRC 17464 / JCM 30415 / NCIMB 11848 / C-107), this protein is tRNA (guanine-N(1)-)-methyltransferase.